The following is a 261-amino-acid chain: Glucose 1-dehydrogenase 1 (261 aa).

An NADP(+)-binding site is contributed by 11-35 (VITGSSTGLGKAMAIRFATEKAKVV). Ser145 serves as a coordination point for substrate. Tyr158 functions as the Proton acceptor in the catalytic mechanism.

It belongs to the short-chain dehydrogenases/reductases (SDR) family. Homotetramer.

It carries out the reaction D-glucose + NAD(+) = D-glucono-1,5-lactone + NADH + H(+). The catalysed reaction is D-glucose + NADP(+) = D-glucono-1,5-lactone + NADPH + H(+). Its function is as follows. May play some role in spore germination. This chain is Glucose 1-dehydrogenase 1 (gdhI), found in Priestia megaterium (Bacillus megaterium).